Here is a 1410-residue protein sequence, read N- to C-terminus: Condensin-1 complex subunit CAP-D2 (1410 aa).

Basic and acidic residues predominate over residues 469–480 (LEPTEHASKEST). Disordered regions lie at residues 469–492 (LEPT…DGEI), 504–525 (HQDS…EKDV), 860–879 (KTKK…NLEA), and 1208–1410 (KEQE…GSRS). Polar residues predominate over residues 869-879 (ESQNTEENLEA). Over residues 1208–1226 (KEQEETARNAEVHREKTKT) the composition is skewed to basic and acidic residues. Composition is skewed to acidic residues over residues 1240–1284 (PVEE…EEPD) and 1306–1319 (IETE…DSEP). Polar residues predominate over residues 1323-1339 (QCGTTNPRSLNRKTSGD). Over residues 1342–1365 (IETESEEEQSDSEEEPSDSEEEPD) the composition is skewed to acidic residues. The segment covering 1368-1379 (QCGTTNPRSLNQ) has biased composition (polar residues).

Belongs to the CND1 (condensin subunit 1) family. In terms of assembly, component of the condensin complex. Present in buds.

The protein resides in the chromosome. Its subcellular location is the nucleus. Functionally, essential protein. Regulatory subunit of the condensin complex, a complex required for conversion of interphase chromatin into mitotic-like condense chromosomes. The condensin complex probably introduces positive supercoils into relaxed DNA in the presence of type I topoisomerases and converts nicked DNA into positive knotted forms in the presence of type II topoisomerases. Required for fertility, growth and euchromatin organization, but not for sister chromatid cohesion. Necessary to maintain normal structural integrity of the meiotic chromosomes during the two nuclear divisions of gametogenesis, especially to maintain compaction of the centromeric repeats and 45S rDNA. Also seems to be involved in crossover formation during meiotic prophase I. Prevents centromeric and pericentromeric heterochromatin repeats association. Contributes to the induction of stress-responsive genes in response to stress treatment. The chain is Condensin-1 complex subunit CAP-D2 from Arabidopsis thaliana (Mouse-ear cress).